Consider the following 295-residue polypeptide: Zygote arrest protein 1.S (295 aa).

2 disordered regions span residues 80–115 (SVQCSLGPRTLLRRRPGALRKPPPEQGSPASPTKTV) and 144–186 (EKGE…APAQ). The span at 144-176 (EKGEAVRSEGSEGGRQEGKQGDGEIKEQMKMDK) shows a compositional bias: basic and acidic residues. A 3CxxC-type zinc finger spans residues 197–280 (KYGYYHCKDC…RQDLCGRCKG (84 aa)).

Belongs to the ZAR1 family. In terms of tissue distribution, ovary. Also expressed in lung and muscle.

The protein resides in the cytoplasm. It is found in the cytoplasmic ribonucleoprotein granule. In terms of biological role, mRNA-binding protein required for maternal mRNA storage, translation and degradation during oocyte maturation. Probably promotes formation of some phase-separated membraneless compartment that stores maternal mRNAs in oocytes: acts by undergoing liquid-liquid phase separation upon binding to maternal mRNAs. Binds to the 3'-UTR of maternal mRNAs in immature oocytes, inhibiting their translation. The protein is Zygote arrest protein 1.S (zar1.S) of Xenopus laevis (African clawed frog).